The following is a 120-amino-acid chain: Large ribosomal subunit protein eL34x (120 aa).

The interval 31-50 (TYQTTNKRASGPKCPVTGKR) is disordered.

It belongs to the eukaryotic ribosomal protein eL34 family.

The protein is Large ribosomal subunit protein eL34x (RPL34C) of Arabidopsis thaliana (Mouse-ear cress).